We begin with the raw amino-acid sequence, 267 residues long: Methylglyoxal reductase DkgB (267 aa).

Tyrosine 39 acts as the Proton donor in catalysis. Position 97 (histidine 97) interacts with substrate. Methionine 179 to asparagine 231 contributes to the NADP(+) binding site.

This sequence belongs to the aldo/keto reductase family. As to quaternary structure, monomer.

The protein localises to the cytoplasm. It carries out the reaction hydroxyacetone + NADP(+) = methylglyoxal + NADPH + H(+). Aldo-keto reductase that significantly contributes to cellular methylglyoxal detoxification by catalyzing the NADPH-dependent conversion of methylglyoxal to acetol. The protein is Methylglyoxal reductase DkgB of Salmonella typhi.